The sequence spans 274 residues: Triosephosphate isomerase (274 aa).

Residue 13 to 15 (NWK) coordinates substrate. The Electrophile role is filled by His98. The active-site Proton acceptor is the Glu170. Positions 176 and 216 each coordinate substrate.

Belongs to the triosephosphate isomerase family. In terms of assembly, homodimer.

The protein localises to the cytoplasm. The enzyme catalyses D-glyceraldehyde 3-phosphate = dihydroxyacetone phosphate. Its pathway is carbohydrate biosynthesis; gluconeogenesis. The protein operates within carbohydrate degradation; glycolysis; D-glyceraldehyde 3-phosphate from glycerone phosphate: step 1/1. In terms of biological role, involved in the gluconeogenesis. Catalyzes stereospecifically the conversion of dihydroxyacetone phosphate (DHAP) to D-glyceraldehyde-3-phosphate (G3P). In Aster yellows witches'-broom phytoplasma (strain AYWB), this protein is Triosephosphate isomerase.